The following is a 381-amino-acid chain: Arrestin-C (381 aa).

It belongs to the arrestin family. As to quaternary structure, homodimer; disulfide-linked in response to retinal illumination. Interacts with CXCR4; the interaction is dependent on the C-terminal phosphorylation of CXCR4 and modulates the calcium ion mobilization activity of CXCR4. Interacts with GPR84. As to expression, inner and outer segments, and the inner plexiform regions of the retina.

Its subcellular location is the photoreceptor inner segment. The protein localises to the cell projection. It localises to the cilium. The protein resides in the photoreceptor outer segment. In terms of biological role, may play a role in an as yet undefined retina-specific signal transduction. Could bind to photoactivated-phosphorylated red/green opsins. The chain is Arrestin-C (Arr3) from Mus musculus (Mouse).